The primary structure comprises 387 residues: Proline-rich protein 5 (387 aa).

2 interaction with RICTOR regions span residues 10–96 (MSSP…LTKG) and 189–219 (HESR…YGLY). Positions 11–33 (SSPSLSDLGKREPGAAGADERGT) are disordered. Basic and acidic residues predominate over residues 18–33 (LGKREPGAAGADERGT). S253 carries the phosphoserine modification. 2 disordered regions span residues 262–347 (NPVA…PETL) and 365–387 (DFGR…PSVV). Residues 310–321 (SSPSPHSGPCPS) are compositionally biased toward low complexity. S373 is subject to Phosphoserine.

This sequence belongs to the PROTOR family. Associated component of the mechanistic target of rapamycin complex 2 (mTORC2). Binds directly to MTOR and RICTOR within the TORC2 complex.

Associated subunit of mTORC2, which regulates cell growth and survival in response to hormonal signals. mTORC2 is activated by growth factors, but, in contrast to mTORC1, seems to be nutrient-insensitive. mTORC2 seems to function upstream of Rho GTPases to regulate the actin cytoskeleton, probably by activating one or more Rho-type guanine nucleotide exchange factors. PRR5 plays an important role in regulation of PDGFRB expression and in modulation of platelet-derived growth factor signaling. May act as a tumor suppressor in breast cancer. In Rattus norvegicus (Rat), this protein is Proline-rich protein 5.